Consider the following 1507-residue polypeptide: Lhr helicase/ probable uracil glycosylase (1507 aa).

A lhr-Core region spans residues 1-856; it reads MTTNGADPLG…ASLLFGYVGA (856 aa). ATP-binding residues include F24, Q31, K54, and T55. In terms of domain architecture, Helicase ATP-binding spans 35 to 226; sequence WSAISEGNNT…FLSGQAPTTI (192 aa). SsDNA contacts are provided by R122, R131, T145, S148, and M152. Residues D170 and E171 each contribute to the ATP site. Positions 170–173 match the DEAH box motif; the sequence is DEVH. Residues S253, W255, and R279 each coordinate ssDNA. The Helicase C-terminal domain maps to 257 to 451; the sequence is DVEERIVDLV…VLAQHTVAVA (195 aa). ATP is bound by residues I377, R394, and H397. SsDNA is bound by residues K410, Q518, R519, I528, W597, D600, and R777. Positions 436 to 529 are WH domain; it reads PANPLDVLAQ…LAVTSGGAIP (94 aa). A domain 4 region spans residues 530–856; sequence DRGMFTVYLA…ASLLFGYVGA (327 aa). The CTD stretch occupies residues 857–1507; it reads FMYEGDSPLA…SRTPRGLRLR (651 aa).

It belongs to the Lhr helicase family. In terms of assembly, monomer. Homooligomerizes, possibly a homotetramer. The cofactor is Ca(2+).

It carries out the reaction Couples ATP hydrolysis with the unwinding of duplex DNA by translocating in the 3'-5' direction.. The catalysed reaction is ATP + H2O = ADP + phosphate + H(+). It catalyses the reaction Hydrolyzes single-stranded DNA or mismatched double-stranded DNA and polynucleotides, releasing free uracil.. In terms of biological role, a 3'-5' helicase involved in repair of at least 3 types of DNA cross-links, mitomycin C (MMC), cisplatin, and psoralen-UVA. Translocates 3'-to-5' on single-stranded (ss)DNA, unwinding any encountered duplex nucleic acid. A 3'-ssDNA loading strand of at least 15 nucleotides is required for helicase activity. An RNA:DNA hybrid with a 3'-ssDNA loading strand is an 8-fold better helicase substrate than 3'-tailed double-stranded (ds)DNA; substrates where the helicase loads on a 3'-ssRNA tail (DNA:RNA and RNA:RNA) are not unwound. Only (d)ATP is hydrolyzed by the protein, which has no ATPase activity in the absence of ssDNA or ssRNA. Arg-279 and Trp-597 are needed to couple ATP hydrolysis to mechanical work; a salt bridge between Arg-280 and Glu-550 closes a clamp around the ssDNA that is not large enough for dsDNA, while Ile-528 wedges between bases of the loading strand. Excises uracil residues from ssDNA. Uracil residues in DNA can arise as a result of misincorporation of dUMP residues by DNA polymerase or due to deamination of cytosine. The protein is Lhr helicase/ probable uracil glycosylase of Mycolicibacterium smegmatis (strain ATCC 700084 / mc(2)155) (Mycobacterium smegmatis).